The following is a 500-amino-acid chain: MSKAKKTAVTPTREENFPEWYQQVIKASDMAENSPVRGCMVIKPWGYGIWEAIQRDLDRRIKETGHENCYFPLFIPLSFLEKEAAHVEGFAKEMAVVTHHRLVAEDGKLVPSGKLEEPLVVRPTSETIIGDAFARWIQSYRDLPMLVNQWANVVRWEMRPRIFLRTAEFLWQEGHTAHATAEEAMDETLKMLEVYRVMAEEVLAMPVIVGEKPAHERFPGADKTYSIEAMMQDGKALQAGTSHFLGQHFSKAQNIRYQTAQGGEEFCYTTSWGVSTRLIGGVIMSHADDNGLRVPPRIAPKQIVFVPITRADGDEALIEDFLAPIVKDLSAQSFGGERLRVHVDRRPLAPPEKRWEWVKKGAPIICEVGPRDVAGGSVAMIRRDGELKGQITPKDELVSRAAAILEDIQKTLFTQAATALKERTVTVRTLDDFLAVFADDTTFGRKFVRARWCGDSDTLAKLDEYSITIRNVPFDQDGEAGTCVLSGRPATQEVIFAKSY.

The protein belongs to the class-II aminoacyl-tRNA synthetase family. ProS type 3 subfamily. As to quaternary structure, homodimer.

It is found in the cytoplasm. It carries out the reaction tRNA(Pro) + L-proline + ATP = L-prolyl-tRNA(Pro) + AMP + diphosphate. Functionally, catalyzes the attachment of proline to tRNA(Pro) in a two-step reaction: proline is first activated by ATP to form Pro-AMP and then transferred to the acceptor end of tRNA(Pro). This Paramagnetospirillum magneticum (strain ATCC 700264 / AMB-1) (Magnetospirillum magneticum) protein is Proline--tRNA ligase.